A 349-amino-acid polypeptide reads, in one-letter code: Autophagy-related protein 3 (349 aa).

The tract at residues 95 to 173 is flexible region; it reads ALVNDGDDFK…IRDSGADSKN (79 aa). Residue Cys-244 is the Glycyl thioester intermediate of the active site. A handle region region spans residues 248 to 325; the sequence is SVMKTLLDRA…DQEVAIRVDQ (78 aa). The short motif at 306-309 is the ATG8 interaction motif (AIM) element; that stretch reads WEEV.

It belongs to the ATG3 family. Monomer. Interacts with ATG8 through an intermediate thioester bond between Cys-244 and the C-terminal Gly of ATG8. Interacts with the C-terminal region of the E1-like ATG7 enzyme. Also interacts with the ATG12-ATG5 conjugate.

It localises to the cytoplasm. E2 conjugating enzyme required for the cytoplasm to vacuole transport (Cvt) and autophagy. Required for selective autophagic degradation of the nucleus (nucleophagy) as well as for mitophagy which contributes to regulate mitochondrial quantity and quality by eliminating the mitochondria to a basal level to fulfill cellular energy requirements and preventing excess ROS production. Responsible for the E2-like covalent binding of phosphatidylethanolamine to the C-terminal Gly of ATG8. The ATG12-ATG5 conjugate plays a role of an E3 and promotes the transfer of ATG8 from ATG3 to phosphatidylethanolamine (PE). This step is required for the membrane association of ATG8. The formation of the ATG8-phosphatidylethanolamine conjugate is essential for autophagy and for the cytoplasm to vacuole transport (Cvt). The ATG8-PE conjugate mediates tethering between adjacent membranes and stimulates membrane hemifusion, leading to expansion of the autophagosomal membrane during autophagy. Autophagy is required for proper vegetative growth, asexual/sexual reproduction, and full virulence. Autophagy is particularly involved in the biosynthesis of deoxynivalenol (DON), an important virulence determinant. This Gibberella zeae (strain ATCC MYA-4620 / CBS 123657 / FGSC 9075 / NRRL 31084 / PH-1) (Wheat head blight fungus) protein is Autophagy-related protein 3.